Reading from the N-terminus, the 131-residue chain is MSMSDPIADMLTRIRNGQQAQKVSVSMPCSKLKVAIAKVLQDEGYIDGYSIREAGGKPELDVALKYYAGRPVIERIERVSRPGLRVYKGSGDLPRVMNGLGVAIVSTPRGVMTDRAARAGRVGGEVICYVA.

Belongs to the universal ribosomal protein uS8 family. As to quaternary structure, part of the 30S ribosomal subunit. Contacts proteins S5 and S12.

In terms of biological role, one of the primary rRNA binding proteins, it binds directly to 16S rRNA central domain where it helps coordinate assembly of the platform of the 30S subunit. The sequence is that of Small ribosomal subunit protein uS8 from Aromatoleum aromaticum (strain DSM 19018 / LMG 30748 / EbN1) (Azoarcus sp. (strain EbN1)).